The following is a 2315-amino-acid chain: MRILKRFLACIQLLCVCRLDWANGYYRQQRKLVEEIGWSYTGALNQKNWGKKYPTCNSPKQSPINIDEDLTQVNVNLKKLKFQGWDKTSLENTFIHNTGKTVEINLTNDYRVSGGVSEMVFKASKITFHWGKCNMSSDGSEHSLEGQKFPLEMQIYCFDADRFSSFEEAVKGKGKLRALSILFEVGTEENLDFKAIIDGVESVSRFGKQAALDPFILLNLLPNSTDKYYIYNGSLTSPPCTDTVDWIVFKDTVSISESQLAVFCEVLTMQQSGYVMLMDYLQNNFREQQYKFSRQVFSSYTGKEEIHEAVCSSEPENVQADPENYTSLLVTWERPRVVYDTMIEKFAVLYQQLDGEDQTKHEFLTDGYQDLGAILNNLLPNMSYVLQIVAICTNGLYGKYSDQLIVDMPTDNPELDLFPELIGTEEIIKEEEEGKDIEEGAIVNPGRDSATNQIRKKEPQISTTTHYNRIGTKYNEAKTNRSPTRGSEFSGKGDVPNTSLNSTSQPVTKLATEKDISLTSQTVTELPPHTVEGTSASLNDGSKTVLRSPHMNLSGTAESLNTVSITEYEEESLLTSFKLDTGAEDSSGSSPATSAIPFISENISQGYIFSSENPETITYDVLIPESARNASEDSTSSGSEESLKDPSMEGNVWFPSSTDITAQPDVGSGRESFLQTNYTEIRVDESEKTTKSFSAGPVMSQGPSVTDLEMPHYSTFAYFPTEVTPHAFTPSSRQQDLVSTVNVVYSQTTQPVYNGETPLQPSYSSEVFPLVTPLLLDNQILNTTPAASSSDSALHATPVFPSVDVSFESILSSYDGAPLLPFSSASFSSELFRHLHTVSQILPQVTSATESDKVPLHASLPVAGGDLLLEPSLAQYSDVLSTTHAASETLEFGSESGVLYKTLMFSQVEPPSSDAMMHARSSGPEPSYALSDNEGSQHIFTVSYSSAIPVHDSVGVTYQGSLFSGPSHIPIPKSSLITPTASLLQPTHALSGDGEWSGASSDSEFLLPDTDGLTALNISSPVSVAEFTYTTSVFGDDNKALSKSEIIYGNETELQIPSFNEMVYPSESTVMPNMYDNVNKLNASLQETSVSISSTKGMFPGSLAHTTTKVFDHEISQVPENNFSVQPTHTVSQASGDTSLKPVLSANSEPASSDPASSEMLSPSTQLLFYETSASFSTEVLLQPSFQASDVDTLLKTVLPAVPSDPILVETPKVDKISSTMLHLIVSNSASSENMLHSTSVPVFDVSPTSHMHSASLQGLTISYASEKYEPVLLKSESSHQVVPSLYSNDELFQTANLEINQAHPPKGRHVFATPVLSIDEPLNTLINKLIHSDEILTSTKSSVTGKVFAGIPTVASDTFVSTDHSVPIGNGHVAITAVSPHRDGSVTSTKLLFPSKATSELSHSAKSDAGLVGGGEDGDTDDDGDDDDDDRGSDGLSIHKCMSCSSYRESQEKVMNDSDTHENSLMDQNNPISYSLSENSEEDNRVTSVSSDSQTGMDRSPGKSPSANGLSQKHNDGKEENDIQTGSALLPLSPESKAWAVLTSDEESGSGQGTSDSLNENETSTDFSFADTNEKDADGILAAGDSEITPGFPQSPTSSVTSENSEVFHVSEAEASNSSHESRIGLAEGLESEKKAVIPLVIVSALTFICLVVLVGILIYWRKCFQTAHFYLEDSTSPRVISTPPTPIFPISDDVGAIPIKHFPKHVADLHASSGFTEEFETLKEFYQEVQSCTVDLGITADSSNHPDNKHKNRYINIVAYDHSRVKLAQLAEKDGKLTDYINANYVDGYNRPKAYIAAQGPLKSTAEDFWRMIWEHNVEVIVMITNLVEKGRRKCDQYWPADGSEEYGNFLVTQKSVQVLAYYTVRNFTLRNTKIKKGSQKGRPSGRVVTQYHYTQWPDMGVPEYSLPVLTFVRKAAYAKRHAVGPVVVHCSAGVGRTGTYIVLDSMLQQIQHEGTVNIFGFLKHIRSQRNYLVQTEEQYVFIHDTLVEAILSKETEVLDSHIHAYVNALLIPGPAGKTKLEKQFQLLSQSNIQQSDYSAALKQCNREKNRTSSIIPVERSRVGISSLSGEGTDYINASYIMGYYQSNEFIITQHPLLHTIKDFWRMIWDHNAQLVVMIPDGQNMAEDEFVYWPNKDEPINCESFKVTLMAEEHKCLSNEEKLIIQDFILEATQDDYVLEVRHFQCPKWPNPDSPISKTFELISVIKEEAANRDGPMIVHDEHGGVTAGTFCALTTLMHQLEKENSVDVYQVAKMINLMRPGVFADIEQYQFLYKVILSLVSTRQEENPSTSLDSNGAALPDGNIAESLESLV.

An N-terminal signal peptide occupies residues 1-24 (MRILKRFLACIQLLCVCRLDWANG). Topologically, residues 25-1636 (YYRQQRKLVE…LAEGLESEKK (1612 aa)) are extracellular. In terms of domain architecture, Alpha-carbonic anhydrase spans 36 to 300 (IGWSYTGALN…KFSRQVFSSY (265 aa)). Disulfide bonds link cysteine 56–cysteine 240 and cysteine 133–cysteine 264. Asparagine 105, asparagine 134, asparagine 223, asparagine 232, asparagine 324, and asparagine 381 each carry an N-linked (GlcNAc...) asparagine glycan. The 100-residue stretch at 314-413 (EPENVQADPE…LIVDMPTDNP (100 aa)) folds into the Fibronectin type-III domain. 2 disordered regions span residues 442-462 (IVNP…PQIS) and 477-507 (AKTN…SQPV). The span at 496–507 (PNTSLNSTSQPV) shows a compositional bias: polar residues. Asparagine 497, asparagine 501, and asparagine 552 each carry an N-linked (GlcNAc...) asparagine glycan. Serine 587 is a glycosylation site (O-linked (Xyl...) (chondroitin sulfate) serine). Residues asparagine 602 and asparagine 629 are each glycosylated (N-linked (GlcNAc...) asparagine). A disordered region spans residues 628–650 (RNASEDSTSSGSEESLKDPSMEG). Phosphoserine; alternate is present on serine 637. An O-linked (Xyl...) (chondroitin sulfate) serine; alternate glycan is attached at serine 637. Serine 639 carries the post-translational modification Phosphoserine. A glycan (N-linked (GlcNAc...) asparagine) is linked at asparagine 677. Serine 997 carries O-linked (Xyl...) (chondroitin sulfate) serine glycosylation. 4 N-linked (GlcNAc...) asparagine glycosylation sites follow: asparagine 1017, asparagine 1050, asparagine 1082, and asparagine 1122. A compositionally biased stretch (polar residues) spans 1123 to 1138 (FSVQPTHTVSQASGDT). 4 disordered regions span residues 1123 to 1160 (FSVQ…SSEM), 1397 to 1523 (KATS…EEND), 1543 to 1572 (LTSD…SFAD), and 1584 to 1621 (AGDS…NSSH). Residues 1145-1159 (SANSEPASSDPASSE) show a composition bias toward low complexity. The segment covering 1417 to 1432 (EDGDTDDDGDDDDDDR) has biased composition (acidic residues). Positions 1450-1465 (ESQEKVMNDSDTHENS) are enriched in basic and acidic residues. N-linked (GlcNAc...) asparagine glycosylation occurs at asparagine 1457. 2 stretches are compositionally biased toward polar residues: residues 1466 to 1479 (LMDQ…SLSE) and 1487 to 1513 (VTSV…GLSQ). Serine 1549 and serine 1551 each carry an O-linked (Xyl...) (chondroitin sulfate) serine glycan. Composition is skewed to polar residues over residues 1554–1572 (GTSD…SFAD) and 1593–1606 (FPQS…SENS). A glycan (N-linked (GlcNAc...) asparagine) is linked at asparagine 1562. The N-linked (GlcNAc...) asparagine glycan is linked to asparagine 1618. The helical transmembrane segment at 1637–1662 (AVIPLVIVSALTFICLVVLVGILIYW) threads the bilayer. Residues 1663 to 2315 (RKCFQTAHFY…NIAESLESLV (653 aa)) lie on the Cytoplasmic side of the membrane. Phosphothreonine is present on residues threonine 1684 and threonine 1687. 2 Tyrosine-protein phosphatase domains span residues 1717–1992 (FTEE…LVEA) and 2023–2282 (LEKQ…ILSL). Substrate is bound by residues aspartate 1901, 1933–1939 (CSAGVGR), and glutamine 1977. Cysteine 1933 serves as the catalytic Phosphocysteine intermediate. At serine 2055 the chain carries Phosphoserine.

Belongs to the protein-tyrosine phosphatase family. Receptor class 5 subfamily. As to quaternary structure, the carbonic-anhydrase like domain interacts with CNTN1 (contactin). Interacts with PTN. Interaction with PTN promotes formation of homooligomers; oligomerization impairs phosphatase activity. Interacts (via chondroitin sulfate chains) with MDK (via C-terminal); this interaction is inhibited by PTN; this interaction promotes neuronal migration. In terms of tissue distribution, specifically expressed in the central nervous system, where it is localized in the Purkinje cell layer of the cerebellum, the dentate gyrus, and the subependymal layer of the anterior horn of the lateral ventricle. Developmentally regulated in the brain.

It localises to the cell membrane. Its subcellular location is the secreted. The enzyme catalyses O-phospho-L-tyrosyl-[protein] + H2O = L-tyrosyl-[protein] + phosphate. Functionally, protein tyrosine phosphatase that negatively regulates oligodendrocyte precursor proliferation in the embryonic spinal cord. Required for normal differentiation of the precursor cells into mature, fully myelinating oligodendrocytes. May play a role in protecting oligondendrocytes against apoptosis. May play a role in the establishment of contextual memory, probably via the dephosphorylation of proteins that are part of important signaling cascades. This chain is Receptor-type tyrosine-protein phosphatase zeta (PTPRZ1), found in Homo sapiens (Human).